Reading from the N-terminus, the 569-residue chain is Proline--tRNA ligase (569 aa).

It belongs to the class-II aminoacyl-tRNA synthetase family. ProS type 1 subfamily. Homodimer.

It is found in the cytoplasm. It catalyses the reaction tRNA(Pro) + L-proline + ATP = L-prolyl-tRNA(Pro) + AMP + diphosphate. Catalyzes the attachment of proline to tRNA(Pro) in a two-step reaction: proline is first activated by ATP to form Pro-AMP and then transferred to the acceptor end of tRNA(Pro). As ProRS can inadvertently accommodate and process non-cognate amino acids such as alanine and cysteine, to avoid such errors it has two additional distinct editing activities against alanine. One activity is designated as 'pretransfer' editing and involves the tRNA(Pro)-independent hydrolysis of activated Ala-AMP. The other activity is designated 'posttransfer' editing and involves deacylation of mischarged Ala-tRNA(Pro). The misacylated Cys-tRNA(Pro) is not edited by ProRS. This chain is Proline--tRNA ligase, found in Dehalococcoides mccartyi (strain ATCC BAA-2266 / KCTC 15142 / 195) (Dehalococcoides ethenogenes (strain 195)).